Consider the following 271-residue polypeptide: Formamidopyrimidine-DNA glycosylase (271 aa).

Pro-2 serves as the catalytic Schiff-base intermediate with DNA. Glu-3 acts as the Proton donor in catalysis. The active-site Proton donor; for beta-elimination activity is the Lys-57. Residues His-90, Arg-109, and Lys-151 each contribute to the DNA site. The FPG-type zinc finger occupies 236–270 (HVYGRGGETCTQCGNLLSEIRLGQRTTVFCSICQP). Arg-260 serves as the catalytic Proton donor; for delta-elimination activity.

Belongs to the FPG family. As to quaternary structure, monomer. Zn(2+) serves as cofactor.

The catalysed reaction is Hydrolysis of DNA containing ring-opened 7-methylguanine residues, releasing 2,6-diamino-4-hydroxy-5-(N-methyl)formamidopyrimidine.. The enzyme catalyses 2'-deoxyribonucleotide-(2'-deoxyribose 5'-phosphate)-2'-deoxyribonucleotide-DNA = a 3'-end 2'-deoxyribonucleotide-(2,3-dehydro-2,3-deoxyribose 5'-phosphate)-DNA + a 5'-end 5'-phospho-2'-deoxyribonucleoside-DNA + H(+). Its function is as follows. Involved in base excision repair of DNA damaged by oxidation or by mutagenic agents. Acts as a DNA glycosylase that recognizes and removes damaged bases. Has a preference for oxidized purines, such as 7,8-dihydro-8-oxoguanine (8-oxoG). Has AP (apurinic/apyrimidinic) lyase activity and introduces nicks in the DNA strand. Cleaves the DNA backbone by beta-delta elimination to generate a single-strand break at the site of the removed base with both 3'- and 5'-phosphates. The protein is Formamidopyrimidine-DNA glycosylase of Shewanella oneidensis (strain ATCC 700550 / JCM 31522 / CIP 106686 / LMG 19005 / NCIMB 14063 / MR-1).